A 262-amino-acid chain; its full sequence is LOB domain-containing protein 18 (262 aa).

The region spanning 36-138 (GPCGACKFLR…AEVSYLQAHL (103 aa)) is the LOB domain. The interval 223–262 (VGLGGENSHDLQALAHELLHRQGSPPPAATDHSPSRTMSR) is disordered.

This sequence belongs to the LOB domain-containing protein family. Homodimer and heterodimer with LBD16. Interacts with GIP1. As to expression, expressed in roots, stems, leaves and flowers. Expressed in vascular tissues of hypocotyls, leaves, roots, developing floral organs and siliques.

Its subcellular location is the nucleus. Involved in the positive regulation of tracheary element (TE) differentiation. Involved in a positive feedback loop that maintains or promotes NAC030/VND7 expression that regulates TE differentiation-related genes. Functions in the initiation and emergence of lateral roots, in conjunction with LBD16, downstream of ARF7 and ARF19. Transcriptional activator that directly regulates EXPA14, a gene encoding a cell wall-loosening factor that promotes lateral root emergence. Activates EXPA14 by directly binding to a specific region of its promoter. Transcriptional activator that directly regulates EXPA17, a gene encoding a cell wall-loosening factor that promotes lateral root emergence. Acts downstream of the auxin influx carriers AUX1 and LAX1 in the regulation of lateral root initiation and development. The polypeptide is LOB domain-containing protein 18 (LBD18) (Arabidopsis thaliana (Mouse-ear cress)).